Reading from the N-terminus, the 318-residue chain is Methionyl-tRNA formyltransferase (318 aa).

112-115 contributes to the (6S)-5,6,7,8-tetrahydrofolate binding site; it reads SILP.

Belongs to the Fmt family.

It catalyses the reaction L-methionyl-tRNA(fMet) + (6R)-10-formyltetrahydrofolate = N-formyl-L-methionyl-tRNA(fMet) + (6S)-5,6,7,8-tetrahydrofolate + H(+). In terms of biological role, attaches a formyl group to the free amino group of methionyl-tRNA(fMet). The formyl group appears to play a dual role in the initiator identity of N-formylmethionyl-tRNA by promoting its recognition by IF2 and preventing the misappropriation of this tRNA by the elongation apparatus. The sequence is that of Methionyl-tRNA formyltransferase from Shewanella sp. (strain MR-7).